Consider the following 763-residue polypeptide: MAP7 domain-containing protein 2 (763 aa).

Positions 1–11 (MERGGGGGFGT) are enriched in gly residues. Disordered stretches follow at residues 1–63 (MERG…KERR), 96–124 (WRKL…LREE), 149–268 (SWGA…DVGK), and 300–540 (PLRR…KQKE). Residues 52-63 (SGERQRLAKERR) show a composition bias toward basic and acidic residues. The stretch at 54–147 (ERQRLAKERR…RTQQLELKKK (94 aa)) forms a coiled coil. Residues 192-206 (ESTNACDKLSTSTMS) show a composition bias toward polar residues. Basic and acidic residues-rich tracts occupy residues 355–371 (MPKR…EREG), 385–400 (ALEK…EKHA), and 430–540 (LAEK…KQKE).

The protein belongs to the MAP7 family. Interacts (via N-terminus) with microtubules; facilitates microtubule stabilization. Interacts with kinesin-1 family members, KIF5A, KIF5B and KIF5C.

The protein resides in the cytoplasm. Its subcellular location is the cytoskeleton. The protein localises to the microtubule organizing center. It localises to the centrosome. It is found in the midbody. The protein resides in the cell projection. Its subcellular location is the neuron projection. The protein localises to the axon. In terms of biological role, microtubule-stabilizing protein involved in the control of cell motility and neurite outgrowth. Acts as a critical cofactor for kinesin transport; in the proximal axon regulates kinesin-1 family members, KIF5A, KIF5B and KIF5C recruitment to microtubules and contributes to kinesin-1-mediated transport in the axons. This chain is MAP7 domain-containing protein 2 (MAP7D2), found in Pongo abelii (Sumatran orangutan).